The primary structure comprises 288 residues: Protoheme IX farnesyltransferase (288 aa).

9 consecutive transmembrane segments (helical) span residues 6–26, 44–64, 89–109, 111–131, 138–158, 169–189, 213–233, 238–258, and 268–288; these read VILY…LLSL, FLDS…NNVI, LAIL…VKFI, VVCF…YSFF, ISTI…YCSV, LLIM…ILHF, IILH…INSI, LIIS…ELTI, and IFRW…FGFV.

It belongs to the UbiA prenyltransferase family. Protoheme IX farnesyltransferase subfamily.

Its subcellular location is the cell membrane. It carries out the reaction heme b + (2E,6E)-farnesyl diphosphate + H2O = Fe(II)-heme o + diphosphate. The protein operates within porphyrin-containing compound metabolism; heme O biosynthesis; heme O from protoheme: step 1/1. Converts heme B (protoheme IX) to heme O by substitution of the vinyl group on carbon 2 of heme B porphyrin ring with a hydroxyethyl farnesyl side group. The chain is Protoheme IX farnesyltransferase from Buchnera aphidicola subsp. Baizongia pistaciae (strain Bp).